Consider the following 154-residue polypeptide: OCIA domain-containing protein 2 (154 aa).

The interval 1-22 (MASASARGNQDKDAHFPPPSKQ) is disordered. The region spanning 1 to 120 (MASASARGNQ…HFFEDQLRGA (120 aa)) is the OCIA domain. Position 41 is an N6-acetyllysine (lysine 41).

In terms of assembly, interacts (via OCIA domain) with OCIAD1/ASRIJ and STAT3.

It localises to the endosome. The protein resides in the mitochondrion. It is found in the mitochondrion inner membrane. Has an essential role in the assembly of mitochondrial respiratory chain complex III. Is also required for STAT3 activation and plays a role in cell migration. This is OCIA domain-containing protein 2 (OCIAD2) from Homo sapiens (Human).